We begin with the raw amino-acid sequence, 124 residues long: Small ribosomal subunit protein uS12c (124 aa).

Residues 104–124 (SGGVKDRTQRRSKYGVKKPKS) are disordered. Residues 113 to 124 (RRSKYGVKKPKS) show a composition bias toward basic residues.

The protein belongs to the universal ribosomal protein uS12 family. As to quaternary structure, part of the 30S ribosomal subunit.

Its subcellular location is the plastid. It localises to the chloroplast. Its function is as follows. With S4 and S5 plays an important role in translational accuracy. Located at the interface of the 30S and 50S subunits. In Thalassiosira pseudonana (Marine diatom), this protein is Small ribosomal subunit protein uS12c (rps12).